The primary structure comprises 415 residues: Dynein assembly factor with WD repeat domains 1 (415 aa).

WD repeat units lie at residues 90-129 (AHIL…ELHT), 132-174 (GHKN…HTFR), 175-214 (GHTA…EVVT), 217-256 (GHLA…KVHT), 259-298 (GHCA…YVAT), 301-340 (GHDD…CVTK), 343-384 (GHEG…QVLE), and 386-415 (HTDE…RIWR).

This sequence belongs to the WD repeat WDR69 family. As to quaternary structure, interacts with IFT46. In early mouse embryos, expression is limited to distal, motile ciliated cells of the node.

It is found in the cytoplasm. Its subcellular location is the cytoskeleton. It localises to the flagellum basal body. The protein localises to the flagellum axoneme. Functionally, required for axonemal dynein assembly and ciliary motility in ciliated organs, including Kupffer's vesicle, during embryogenesis. Facilitates the onset of robust cilia motility during development. The sequence is that of Dynein assembly factor with WD repeat domains 1 from Mus musculus (Mouse).